We begin with the raw amino-acid sequence, 288 residues long: Fatty acid-binding protein TM_1468 (288 aa).

Residues Val-3–Val-283 enclose the DegV domain. The hexadecanoate site is built by Thr-63 and Ser-96.

Monomer.

Its function is as follows. Binds long-chain fatty acids, such as palmitate, and may play a role in lipid transport or fatty acid metabolism. The polypeptide is Fatty acid-binding protein TM_1468 (Thermotoga maritima (strain ATCC 43589 / DSM 3109 / JCM 10099 / NBRC 100826 / MSB8)).